The following is a 3515-amino-acid chain: MGKPLSRPDCLRRNPSCLGKGEEEDGYIEDCYVPQRSIYDTMRINEQIDQGSKLNQTSKSTMEKMEGSTISSNGTLGAASNVFESRAPEGKKLDERIIFDALKLSSDVQKSAPVPPRRRPNAERKDNVNRRSWKSFMPPNFPEFAERIEASLSEVSEAGASNPSLQEKKESSSALTESSGHLDHREPQSESVTLEHVSKSIGIPEVQDFKNLSGDCQDFRFQQHSANPPHEFQPVESEAVATSGNTDVMQESRFSSATWPRATKSLAKGGFSEKQHPLGDTACTVEMPPLSPCLSEELLDPELHVLITPSLREKTESELKFEEDERWIMMEAEGEWEEEKLSDREKTFLMADEKNSLADIFEEREQANTAVVEDGSDCLAAVLRTFGHLSLGQICCPDDPQPAKDQLATVPKDIPLDCDCVLTGEDILGEVANRTAQGLEGLVSDSACTVGTIDAEQLSDTDSVQMFLELEKECLCEEGVTPLVELQNQISSEGLAASQDAENLLVISHFSGAALEKEQHLGLLHVRAKDYDTRLDCGYFNTLDSSQVPNAVELIAHVDIMRDTSTVSKEECEKVPFSPRTAEFKSRQPADLDSLEKLDPGGLLNSDHRVSHEEKLSGFIASELAKDNGSLSQGDCSQTEGNGEECIERVTFSFAFNHELTDVTSGPEVEVLYESNLLTDEIHLESGNVTVNQENNSLTSMGNVVTCELSVEKVCDEDGEAKELDYQATLLEDQAPAHFHRNFPEQVFQDLQRKSPESEILSLHLLVEELRLNPDGVETVNDTKPELNVASSEGGEMERRDSDSFLNIFPEKQVTKAGNTEPVLEEWIPVLQRPSRTAAVPTVKDALDAALPSPEEGTSIAAVPAPEGTAVVAALVPFPHEDILVASIVSLEEEDVTAAAVSAPERATVPAVTVSVPEGTAAVAAVSSPEETAPAVAAAITQEGMSAVAGFSPEWAALAITVPITEEDGTPEGPVTPATTVHAPEEPDTAAVRVSTPEEPASPAAAVPTPEEPTSPAAAVPTPEEPTSPAAAVPPPEEPTSPAAAVPTPEEPTSPAAAVPTPEEPTSPAAAVPTPEEPTSPAAAVPTPEEPTSPAAAVPTPEEPTSPAAAVPTPEEPASPAAAVPTPEEPASPAAAVPTPEEPAFPAPAVPTPEESASAAVAVPTPEESASPAAAVPTPAESASFAAVVATLEEPTSPAASVPTPAAMVATLEEFTSPAASVPTSEEPASLAAAVSNPEEPTSPAAAVPTLEEPTSSAAAVLTPEELSSPAASVPTPEEPASPAAAVSNLEEPASPAAAVPTPEVAAIPAASVPTPEVPAIPAAAVPPMEEVSPIGVPFLGVSAHTDSVPISEEGTPVLEEASSTGMWIKEDLDSLVFGIKEVTSTVLHGKVPLAATAGLNSDEMFQKEQVDPLQMKLQQVNGLGQGLIQSAGKDCDVQGLEHDMEEINARWNTLNKKVAQRIAQLQEALLHCGKFQDALEPLLSWLADTEELIANQKPPSAEYKVVKAQIQEQKLLQRLLDDRKATVDMLQAEGGRIAQSAELADREKITGQLESLESRWTELLSKAAARQKQLEDILVLAKQFHETAEPISDFLSVTEKKLANSEPVGTQTAKIQQQIIRHKALNEEIVNRKKNVDQAIKNGQALLKQTTGEEVLLIQEKLDGIKTRYADITVTSSKALRTLEQARQLATKFQSTYEELTGWLREVEEELATSGGQSPTGEQIPQFQQRQKELKKEVMEHRLVLDTVNEVSRALLELVPWRAREGLDKLVSDANEQYKLVSDTIGQRVDEIDAAIQRSQQYEQAADAELAWVAETKRKLMALGPIRLEQDQTTAQLQVQKAFSIDIIRHKDSMDELFSHRSEIFGTCGEEQKTVLQEKTESLIQQYEAISLLNSERYARLERAQVLVNQFWETYEELSPWIEETRALIAQLPSPAIDHEQLRQQQEEMRQLRESIAEHKPHIDKLLKIGPQLKELNPEEGEMVEEKYQKAENMYAQIKEEVRQRALALDEAVSQSTQITEFHDKIEPMLETLENLSSRLRMPPLIPAEVDKIRECISDNKSATVELEKLQPSFEALKRRGEELIGRSQGADKDLAAKEIQDKLDQMVFFWEDIKARAEEREIKFLDVLELAEKFWYDMAALLTTIKDTQDIVHDLESPGIDPSIIKQQVEAAETIKEETDGLHEELEFIRILGADLIFACGETEKPEVRKSIDEMNNAWENLNKTWKERLEKLEDAMQAAVQYQDTLQAMFDWLDNTVIKLCTMPPVGTDLNTVKDQLNEMKEFKVEVYQQQIEMEKLNHQGELMLKKATDETDRDIIREPLTELKHLWENLGEKIAHRQHKLEGALLALGQFQHALEELMSWLTHTEELLDAQRPISGDPKVIEVELAKHHVLKNDVLAHQATVETVNKAGNELLESSAGDDASSLRSRLEAMNQCWESVLQKTEEREQQLQSTLQQAQGFHSEIEDFLLELTRMESQLSASKPTGGLPETAREQLDTHMELYSQLKAKEETYNQLLDKGRLMLLSRDDSGSGSKTEQSVALLEQKWHVVSSKMEERKSKLEEALNLATEFQNSLQEFINWLTLAEQSLNIASPPSLILNTVLSQIEEHKVFANEVNAHRDQIIELDQTGNQLKFLSQKQDVVLIKNLLVSVQSRWEKVVQRSIERGRSLDDARKRAKQFHEAWKKLIDWLEDAESHLDSELEISNDPDKIKLQLSKHKEFQKTLGGKQPVYDTTIRTGRALKEKTLLPEDSQKLDNFLGEVRDKWDTVCGKSVERQHKLEEALLFSGQFMDALQALVDWLYKVEPQLAEDQPVHGDLDLVMNLMDAHKVFQKELGKRTGTVQVLKRSGRELIENSRDDTTWVKGQLQELSTRWDTVCKLSVSKQSRLEQALKQAEVFRDTVHMLLEWLSEAEQTLRFRGALPDDTEALQSLIDTHKEFMKKVEEKRVDVNSAVAMGEVILAVCHPDCITTIKHWITIIRARFEEVLTWAKQHQQRLETALSELVANAELLEELLAWIQWAETTLIQRDQEPIPQNIDRVKALIAEHQTFMEEMTRKQPDVDRVTKTYKRKNIEPTHAPFIEKSRSGGRKSLSQPTPPPMPILSQSEAKNPRINQLSARWQQVWLLALERQRKLNDALDRLEELKEFANFDFDVWRKKYMRWMNHKKSRVMDFFRRIDKDQDGKITRQEFIDGILASKFPTTKLEMTAVADIFDRDGDGYIDYYEFVAALHPNKDAYRPTTDADKIEDEVTRQVAQCKCAKRFQVEQIGENKYRFGDSQQLRLVRILRSTVMVRVGGGWMALDEFLVKNDPCRARGRTNIELREKFILPEGASQGMTPFRSRGRRSKPSSRAASPTRSSSSASQSNHSCTSMPSSPATPASGTKVIPSSGSKLKRPTPTFHSSRTSLAGDTSNSSSPASTGAKTNRADPKKSASRPGSRAGSRAGSRASSRRGSDASDFDLLETQSACSDTSESSAAGGQGNSRRGLNKPSKIPTMSKKTTTASPRTPGPKR.

7 disordered regions span residues 1–23 (MGKPLSRPDCLRRNPSCLGKGEE), 108–136 (VQKSAPVPPRRRPNAERKDNVNRRSWKSF), 155–196 (VSEA…TLEH), 965–1178 (TEED…AVPT), 1217–1298 (SPAA…SPAA), 1710–1730 (EELATSGGQSPTGEQIPQFQQ), and 3078–3108 (PTHAPFIEKSRSGGRKSLSQPTPPPMPILSQ). The span at 120–129 (PNAERKDNVN) shows a compositional bias: basic and acidic residues. The 13 X 13 AA approximate tandem repeat of P-T-S-P-A-A-A-V-P-T-P-E-E stretch occupies residues 157–245 (EAGASNPSLQ…ESEAVATSGN (89 aa)). Low complexity-rich tracts occupy residues 995-1031 (STPEEPASPAAAVPTPEEPTSPAAAVPTPEEPTSPAA) and 1040-1139 (TSPA…AVPT). Repeat copies occupy residues 1012–1024 (EPTSPAAAVPTPE), 1026–1037 (PTSPAAAVPPPE), 1038–1051 (EPTSPAAAVPTPEE), 1052–1064 (PTSPAAAVPTPEE), 1065–1077 (PTSPAAAVPTPEE), 1078–1090 (PTSPAAAVPTPEE), 1091–1103 (PTSPAAAVPTPEE), 1104–1116 (PTSPAAAVPTPEE), 1117–1129 (PASPAAAVPTPEE), 1130–1142 (PASPAAAVPTPEE), 1143–1155 (PAFPAPAVPTPEE), 1156–1168 (SASAAVAVPTPEE), and 1169–1178 (SASPAAAVPT). The segment covering 1140 to 1151 (PEEPAFPAPAVP) has biased composition (pro residues). Composition is skewed to low complexity over residues 1162 to 1178 (AVPTPEESASPAAAVPT) and 1268 to 1298 (SSPAASVPTPEEPASPAAAVSNLEEPASPAA). The span at 1715–1730 (SGGQSPTGEQIPQFQQ) shows a compositional bias: polar residues. 2 consecutive EF-hand domains span residues 3168-3203 (HKKSRVMDFFRRIDKDQDGKITRQEFIDGILASKFP) and 3204-3239 (TTKLEMTAVADIFDRDGDGYIDYYEFVAALHPNKDA). Ca(2+) is bound by residues D3181, D3183, D3185, K3187, E3192, D3217, D3219, D3221, Y3223, and E3228. The GAR domain maps to 3244–3316 (TDADKIEDEV…EFLVKNDPCR (73 aa)). The tract at residues 3332-3515 (PEGASQGMTP…ASPRTPGPKR (184 aa)) is disordered. Low complexity predominate over residues 3352–3386 (SSRAASPTRSSSSASQSNHSCTSMPSSPATPASGT). A compositionally biased stretch (polar residues) spans 3402 to 3426 (TFHSSRTSLAGDTSNSSSPASTGAK). Low complexity predominate over residues 3437–3451 (SRPGSRAGSRAGSRA). The segment covering 3466–3488 (ETQSACSDTSESSAAGGQGNSRR) has biased composition (polar residues).

It is found in the cytoplasm. The protein localises to the cytoskeleton. This is Microtubule-actin cross-linking factor 1, isoforms 6/7 from Homo sapiens (Human).